We begin with the raw amino-acid sequence, 332 residues long: DNA repair and recombination protein RadA (332 aa).

126-133 contacts ATP; that stretch reads GEFGSGKT.

It belongs to the eukaryotic RecA-like protein family.

Functionally, involved in DNA repair and in homologous recombination. Binds and assemble on single-stranded DNA to form a nucleoprotein filament. Hydrolyzes ATP in a ssDNA-dependent manner and promotes DNA strand exchange between homologous DNA molecules. The protein is DNA repair and recombination protein RadA of Pyrobaculum calidifontis (strain DSM 21063 / JCM 11548 / VA1).